The following is a 324-amino-acid chain: Brorin (324 aa).

An N-terminal signal peptide occupies residues 1 to 27 (MPSSSAMAVGALSSSLLVTCCLMVALC). The segment at 37–126 (AQAPEQPGQE…TPQGEPPAAA (90 aa)) is disordered. 2 stretches are compositionally biased toward basic and acidic residues: residues 44–56 (GQEK…RDSP) and 64–78 (RASR…DWKS). The span at 92 to 107 (KQKQAWAAQGGSAKAA) shows a compositional bias: low complexity. Residues 114–116 (RGD) carry the Mediates cell adhesion motif. 2 consecutive VWFC domains span residues 152–211 (KGCV…PQCK) and 215–273 (NYCE…PICK).

In terms of assembly, peripherally associated with AMPAR complex. AMPAR complex consists of an inner core made of 4 pore-forming GluA/GRIA proteins (GRIA1, GRIA2, GRIA3 and GRIA4) and 4 major auxiliary subunits arranged in a twofold symmetry. One of the two pairs of distinct binding sites is occupied either by CNIH2, CNIH3 or CACNG2, CACNG3. The other harbors CACNG2, CACNG3, CACNG4, CACNG8 or GSG1L. This inner core of AMPAR complex is complemented by outer core constituents binding directly to the GluA/GRIA proteins at sites distinct from the interaction sites of the inner core constituents. Outer core constituents include at least PRRT1, PRRT2, CKAMP44/SHISA9, FRRS1L and NRN1. The proteins of the inner and outer core serve as a platform for other, more peripherally associated AMPAR constituents, including VWC2. Alone or in combination, these auxiliary subunits control the gating and pharmacology of the AMPAR complex and profoundly impact their biogenesis and protein processing. As to expression, predominantly expressed in the brain (at protein level). It is expressed in the neurons but not the glial cells.

Its subcellular location is the secreted. It is found in the extracellular space. It localises to the extracellular matrix. The protein localises to the basement membrane. The protein resides in the synapse. BMP antagonist which may play a role in neural development. Promotes cell adhesion. This is Brorin (Vwc2) from Mus musculus (Mouse).